A 657-amino-acid chain; its full sequence is Heat shock protein hsp-6 (657 aa).

The N-terminal 27 residues, 1-27 (MLSARSFLSSARTIARSSLMSARSLSD), are a transit peptide targeting the mitochondrion. A disordered region spans residues 637-657 (KNSGGDAQEAKTAEEPKKEQN). Basic and acidic residues predominate over residues 644–657 (QEAKTAEEPKKEQN).

The protein belongs to the heat shock protein 70 family.

It is found in the mitochondrion. In Caenorhabditis elegans, this protein is Heat shock protein hsp-6.